Reading from the N-terminus, the 454-residue chain is Histidine--tRNA ligase (454 aa).

This sequence belongs to the class-II aminoacyl-tRNA synthetase family. Homodimer.

Its subcellular location is the cytoplasm. It catalyses the reaction tRNA(His) + L-histidine + ATP = L-histidyl-tRNA(His) + AMP + diphosphate + H(+). This Phocaeicola vulgatus (strain ATCC 8482 / DSM 1447 / JCM 5826 / CCUG 4940 / NBRC 14291 / NCTC 11154) (Bacteroides vulgatus) protein is Histidine--tRNA ligase.